The primary structure comprises 264 residues: S-adenosylmethionine decarboxylase proenzyme (264 aa).

Ser112 serves as the catalytic Schiff-base intermediate with substrate; via pyruvic acid. Ser112 is subject to Pyruvic acid (Ser); by autocatalysis. His117 acts as the Proton acceptor; for processing activity in catalysis. Cys140 acts as the Proton donor; for catalytic activity in catalysis.

Belongs to the prokaryotic AdoMetDC family. Type 2 subfamily. Heterooctamer of four alpha and four beta chains arranged as a tetramer of alpha/beta heterodimers. The cofactor is pyruvate. In terms of processing, is synthesized initially as an inactive proenzyme. Formation of the active enzyme involves a self-maturation process in which the active site pyruvoyl group is generated from an internal serine residue via an autocatalytic post-translational modification. Two non-identical subunits are generated from the proenzyme in this reaction, and the pyruvate is formed at the N-terminus of the alpha chain, which is derived from the carboxyl end of the proenzyme. The post-translation cleavage follows an unusual pathway, termed non-hydrolytic serinolysis, in which the side chain hydroxyl group of the serine supplies its oxygen atom to form the C-terminus of the beta chain, while the remainder of the serine residue undergoes an oxidative deamination to produce ammonia and the pyruvoyl group blocking the N-terminus of the alpha chain.

It catalyses the reaction S-adenosyl-L-methionine + H(+) = S-adenosyl 3-(methylsulfanyl)propylamine + CO2. Its pathway is amine and polyamine biosynthesis; S-adenosylmethioninamine biosynthesis; S-adenosylmethioninamine from S-adenosyl-L-methionine: step 1/1. Its function is as follows. Catalyzes the decarboxylation of S-adenosylmethionine to S-adenosylmethioninamine (dcAdoMet), the propylamine donor required for the synthesis of the polyamines spermine and spermidine from the diamine putrescine. This chain is S-adenosylmethionine decarboxylase proenzyme, found in Salmonella dublin (strain CT_02021853).